Here is a 201-residue protein sequence, read N- to C-terminus: Protein Thf1 (201 aa).

Residues 174-201 (IYKSSISKMEQAKELIQEQRIKDKKKTL) are a coiled coil.

Belongs to the THF1 family.

May be involved in photosynthetic membrane biogenesis. In Prochlorococcus marinus (strain MIT 9312), this protein is Protein Thf1.